Reading from the N-terminus, the 180-residue chain is Inorganic pyrophosphatase (180 aa).

Substrate contacts are provided by Lys-28, Arg-42, and Tyr-54. Mg(2+) contacts are provided by Asp-66, Asp-71, and Asp-102. A substrate-binding site is contributed by Tyr-139.

Belongs to the PPase family. In terms of assembly, homohexamer. The cofactor is Mg(2+).

It localises to the cytoplasm. It catalyses the reaction diphosphate + H2O = 2 phosphate + H(+). In terms of biological role, hydrolyzes PPi generated in anabolic reactions. Catalyzes the hydrolysis of inorganic pyrophosphate (PPi) forming two phosphate ions. The sequence is that of Inorganic pyrophosphatase from Pseudanabaena sp. (strain PCC 6903).